The following is a 573-amino-acid chain: SHC-transforming protein 2 (573 aa).

The 185-residue stretch at 125–309 (LGPGVSYIVR…LEELAWGDDD (185 aa)) folds into the PID domain. Positions 310–477 (AAADHNYYNS…PTEEQLRQEP (168 aa)) are CH1. Phosphotyrosine is present on residues tyrosine 316, tyrosine 317, and tyrosine 395. The SH2 domain maps to 478–569 (WYHGRMSRRA…ESELHLRGVV (92 aa)).

As to quaternary structure, interacts with the Trk receptors in a phosphotyrosine-dependent manner and MEGF12. Once activated, binds to GRB2. Phosphorylated on tyrosine by the Trk receptors. Expressed in brain. Expressed at high level in the hypothalamus and at low level in the caudate nucleus.

In terms of biological role, signaling adapter that couples activated growth factor receptors to signaling pathway in neurons. Involved in the signal transduction pathways of neurotrophin-activated Trk receptors in cortical neurons. This chain is SHC-transforming protein 2 (Shc2), found in Mus musculus (Mouse).